The following is a 614-amino-acid chain: Afadin- and alpha-actinin-binding protein (614 aa).

Coiled coils occupy residues 131-227 and 266-293; these read MDHL…IAMD and RQKQILMENAELKKVLQQMKKEMISLLS. Phosphoserine is present on residues serine 290, serine 293, and serine 312. The tract at residues 292 to 317 is disordered; sequence LSPQKKKPRERVDDSTGTVISDVEED. Residues 374-460 are a coiled coil; the sequence is ISRQDHEQET…RSFTEAAIRL (87 aa). Phosphoserine is present on residues serine 536, serine 540, and serine 542.

This sequence belongs to the ADIP family. As to quaternary structure, interacts with afadin and alpha-actinin. Interacts with VAV2. Interacts with SSX2 and SSX3. Does not interact with SSX1 and SSX4. Interacts with PCM1. Interacts with WRAP73. Widely expressed, with the highest expression in brain, intermediate expression in kidney, testis, spinal cord, liver, heart, lung, skeletal muscle, ovary, fetal liver and fetal brain, and little to no expression in pancreas and spleen. All specific brain regions showed intermediate to high expression, with highest expression in amygdala. Also expressed in fetal tissues, mainly in liver and brain.

The protein resides in the cell junction. Its subcellular location is the adherens junction. It localises to the nucleus. The protein localises to the cytoplasm. It is found in the cytoskeleton. The protein resides in the microtubule organizing center. Its subcellular location is the centrosome. It localises to the centriolar satellite. The protein localises to the cilium basal body. Belongs to an adhesion system, which plays a role in the organization of homotypic, interneuronal and heterotypic cell-cell adherens junctions (AJs). May connect the nectin-afadin and E-cadherin-catenin system through alpha-actinin and may be involved in organization of the actin cytoskeleton at AJs through afadin and alpha-actinin. Involved in cell movement: localizes at the leading edge of moving cells in response to PDGF and is required for the formation of the leading edge and the promotion of cell movement, possibly via activation of Rac signaling. Acts as a centrosome maturation factor, probably by maintaining the integrity of the pericentriolar material and proper microtubule nucleation at mitotic spindle poles. The function seems to implicate at least in part WRAP73; the SSX2IP:WRAP73 complex is proposed to act as regulator of spindle anchoring at the mitotic centrosome. Involved in ciliogenesis. It is required for targeted recruitment of the BBSome, CEP290, RAB8, and SSTR3 to the cilia. This is Afadin- and alpha-actinin-binding protein (SSX2IP) from Homo sapiens (Human).